A 715-amino-acid polypeptide reads, in one-letter code: SANT and BTB domain regulator of class switch recombination (715 aa).

Residues 21–59 (DMILCSLVGVPQPISWDSVARLVPGYTPKECAKRFEELK) form the SANT domain. Residues 146–254 (MVIHVCDEAK…ECIRYCHKNM (109 aa)) enclose the BTB domain. Residues 552-573 (SEEEDYTTGSEVTEDEVGDEEE) show a composition bias toward acidic residues. Disordered regions lie at residues 552–623 (SEEE…VSLQ) and 689–715 (SAHS…GRPT). Positions 578–605 (QAGRKVKPKRSAKQTKKHISSPSIHKKE) are enriched in basic residues. 2 stretches are compositionally biased toward polar residues: residues 614–623 (DSSPFTVSLQ) and 690–699 (AHSNTRQMNT).

It belongs to the KIAA1841 family. In terms of assembly, homodimer.

In terms of biological role, negatively regulates class switch recombination or isotype switching in splenic B-cells. The chain is SANT and BTB domain regulator of class switch recombination from Xenopus laevis (African clawed frog).